Consider the following 350-residue polypeptide: Nicotinate-nucleotide--dimethylbenzimidazole phosphoribosyltransferase (350 aa).

Catalysis depends on E317, which acts as the Proton acceptor.

This sequence belongs to the CobT family.

It carries out the reaction 5,6-dimethylbenzimidazole + nicotinate beta-D-ribonucleotide = alpha-ribazole 5'-phosphate + nicotinate + H(+). Its pathway is nucleoside biosynthesis; alpha-ribazole biosynthesis; alpha-ribazole from 5,6-dimethylbenzimidazole: step 1/2. Functionally, catalyzes the synthesis of alpha-ribazole-5'-phosphate from nicotinate mononucleotide (NAMN) and 5,6-dimethylbenzimidazole (DMB). This is Nicotinate-nucleotide--dimethylbenzimidazole phosphoribosyltransferase from Shewanella putrefaciens (strain CN-32 / ATCC BAA-453).